The sequence spans 131 residues: Squamosa promoter-binding protein 1 (131 aa).

Positions 1 to 10 (MDTSKGEGKR) are enriched in basic and acidic residues. The tract at residues 1–52 (MDTSKGEGKRVIKLPGSQEQGEEEDDIGEDSKKTRALTPSGKRASGSTQRSC) is disordered. An SBP-type zinc finger spans residues 49 to 126 (QRSCQVENCA…AGHNERRRKS (78 aa)). C52, C57, C74, H77, C93, C96, H100, and C112 together coordinate Zn(2+). The short motif at 109–125 (KRSCRRRLAGHNERRRK) is the Bipartite nuclear localization signal element.

It localises to the nucleus. Probable transcriptional factor. Binds to the promoter of the SQUAMOSA gene. The chain is Squamosa promoter-binding protein 1 (SBP1) from Antirrhinum majus (Garden snapdragon).